We begin with the raw amino-acid sequence, 862 residues long: DNA topoisomerase 3-beta-1 (862 aa).

Positions 3–153 constitute a Toprim domain; sequence TVLMVAEKPS…EKTVFRARFS (151 aa). Residues 171-593 form the Topo IA-type catalytic domain; the sequence is DHNEALSVDA…HTLDVFKRKF (423 aa). Tyr336 (O-(5'-phospho-DNA)-tyrosine intermediate) is an active-site residue. The segment covering 821 to 851 has biased composition (basic residues); that stretch reads PMHRGGPGRRQGRGRGRARRPPGKPNPRRPK. The interval 821–854 is disordered; it reads PMHRGGPGRRQGRGRGRARRPPGKPNPRRPKDKM.

The protein belongs to the type IA topoisomerase family. Isoform 1 is found in testis, heart and skeletal muscle. A 4 kb transcript which probably represents isoform 2 is found in thymus, kidney and pancreas.

The catalysed reaction is ATP-independent breakage of single-stranded DNA, followed by passage and rejoining.. Its function is as follows. Releases the supercoiling and torsional tension of DNA introduced during the DNA replication and transcription by transiently cleaving and rejoining one strand of the DNA duplex. Introduces a single-strand break via transesterification at a target site in duplex DNA. The scissile phosphodiester is attacked by the catalytic tyrosine of the enzyme, resulting in the formation of a DNA-(5'-phosphotyrosyl)-enzyme intermediate and the expulsion of a 3'-OH DNA strand. The free DNA strand than undergoes passage around the unbroken strand thus removing DNA supercoils. Finally, in the religation step, the DNA 3'-OH attacks the covalent intermediate to expel the active-site tyrosine and restore the DNA phosphodiester backbone. Possesses negatively supercoiled DNA relaxing activity. This chain is DNA topoisomerase 3-beta-1 (TOP3B), found in Homo sapiens (Human).